The sequence spans 229 residues: Cytochrome c oxidase subunit 2 (229 aa).

Residues 1–26 (MATWAQLNFQDAASPMMEQLHYFHDH) lie on the Mitochondrial intermembrane side of the membrane. A helical transmembrane segment spans residues 27–48 (TMMVLVIITIMVAYIMGTMFFN). Residues 49 to 62 (KDVNRYLLDGQKIE) lie on the Mitochondrial matrix side of the membrane. Residues 63–82 (TEWTIVPVFVLVIIAMPSLR) form a helical membrane-spanning segment. Residues 83 to 229 (LLYLLDEVNE…INWIQNMSEA (147 aa)) lie on the Mitochondrial intermembrane side of the membrane. 6 residues coordinate Cu cation: His161, Cys196, Glu198, Cys200, His204, and Met207. Glu198 serves as a coordination point for Mg(2+).

The protein belongs to the cytochrome c oxidase subunit 2 family. Component of the cytochrome c oxidase (complex IV, CIV), a multisubunit enzyme composed of a catalytic core of 3 subunits and several supernumerary subunits. The complex exists as a monomer or a dimer and forms supercomplexes (SCs) in the inner mitochondrial membrane with ubiquinol-cytochrome c oxidoreductase (cytochrome b-c1 complex, complex III, CIII). Cu cation serves as cofactor.

It localises to the mitochondrion inner membrane. It catalyses the reaction 4 Fe(II)-[cytochrome c] + O2 + 8 H(+)(in) = 4 Fe(III)-[cytochrome c] + 2 H2O + 4 H(+)(out). Functionally, component of the cytochrome c oxidase, the last enzyme in the mitochondrial electron transport chain which drives oxidative phosphorylation. The respiratory chain contains 3 multisubunit complexes succinate dehydrogenase (complex II, CII), ubiquinol-cytochrome c oxidoreductase (cytochrome b-c1 complex, complex III, CIII) and cytochrome c oxidase (complex IV, CIV), that cooperate to transfer electrons derived from NADH and succinate to molecular oxygen, creating an electrochemical gradient over the inner membrane that drives transmembrane transport and the ATP synthase. Cytochrome c oxidase is the component of the respiratory chain that catalyzes the reduction of oxygen to water. Electrons originating from reduced cytochrome c in the intermembrane space (IMS) are transferred via the dinuclear copper A center (CU(A)) of subunit 2 and heme A of subunit 1 to the active site in subunit 1, a binuclear center (BNC) formed by heme A3 and copper B (CU(B)). The BNC reduces molecular oxygen to 2 water molecules using 4 electrons from cytochrome c in the IMS and 4 protons from the mitochondrial matrix. This chain is Cytochrome c oxidase subunit 2 (COII), found in Sympetrum striolatum (Common darter dragonfly).